The chain runs to 173 residues: Myosin light chain 5 (173 aa).

The segment at 1–20 (MASRKTKKKEGGALRAQRAS) is disordered. 3 EF-hand domains span residues 30 to 65 (TQIQ…LGKT), 100 to 135 (DAEE…QADK), and 136 to 171 (MTAE…GEEK). Positions 43, 45, 47, and 54 each coordinate Ca(2+).

In terms of assembly, myosin is a hexamer of 2 heavy chains and 4 light chains. In terms of tissue distribution, expressed in fetal skeletal muscle and retina.

The protein is Myosin light chain 5 (MYL5) of Homo sapiens (Human).